The primary structure comprises 130 residues: Small ribosomal subunit protein uS11 (130 aa).

Belongs to the universal ribosomal protein uS11 family. In terms of assembly, part of the 30S ribosomal subunit. Interacts with proteins S7 and S18. Binds to IF-3.

Its function is as follows. Located on the platform of the 30S subunit, it bridges several disparate RNA helices of the 16S rRNA. Forms part of the Shine-Dalgarno cleft in the 70S ribosome. This Ruegeria pomeroyi (strain ATCC 700808 / DSM 15171 / DSS-3) (Silicibacter pomeroyi) protein is Small ribosomal subunit protein uS11.